Reading from the N-terminus, the 780-residue chain is MKKRLPTLLASLIGSALYSQQALADLADQCLLGVPAYTKPLVSGDANSLPVHIQADKAAANYPEHALFSGNVYIEQGNSTLTADEVQLTQRQEQNNAPLRTATATGNVNYSSNEIKLQGPKAWSNLNTKDTDVYQGNYQIVGRQGRGDADTMKQRGDNRYTVLENGSFTSCLPGDDSWSVVGSEVIHDREEQVAEIWNARFKIGKVPVFYSPYLQIPVGDKRRSGFLIPNAKYGSNNGFEFSAPYYLNLAPNYDATIMPNYMSKRGTQIQTEFRYHTTPGEGLVEFDWLPKDRVYSSEHASDGDSDRWLLYWRHNGVMDQVWRFNVDYTKVSDSNYFDDLDSKYGSTTDGYATQKFSFGYADENWDTALSYKQFQVFDTNSSDAYRTAPQLDVTYYKNDVGPFDFKVFSQAAKFTNVNNSYPEATRLHIEPTLNLPLANRWGSLNTEAKLMATHYQQENIDEYNENTGTGRHLKGSVNRVLPQFKTDGKMVFERDMDYAPDYTQTLEPRLQYLYVPYRNQNDIGVYDSTILQTDYSGLFRDRTYSGLDRISSANQLAGGVTTRIYDDQRAERFNASVGQIYYFSRPRTGDITGTWDNYDNTGSVVWAGDSYWRISNQWGIRGGLQYDSRLNSVALGDAVLEYRRDENRILQLNYHYASPQYIEQMLSDISHTGYQQGISQVGVTGSWQLVDRWSLVGAYYYDTKANQPADQLVGLQYNTCCWAINVGYERKITGWNSTDSSSQYDNKVSFNIELRGLSSNYGLGTDKMLASGILPYQRAF.

The N-terminal stretch at 1–24 (MKKRLPTLLASLIGSALYSQQALA) is a signal peptide.

Belongs to the LptD family. As to quaternary structure, component of the lipopolysaccharide transport and assembly complex. Interacts with LptE and LptA.

Its subcellular location is the cell outer membrane. Together with LptE, is involved in the assembly of lipopolysaccharide (LPS) at the surface of the outer membrane. The sequence is that of LPS-assembly protein LptD from Sodalis glossinidius (strain morsitans).